Here is a 374-residue protein sequence, read N- to C-terminus: O-methyltransferase 16 (374 aa).

Residues S195, G219, D242, D262, and K276 each contribute to the S-adenosyl-L-homocysteine site. S-adenosyl-L-methionine is bound at residue D242. H280 serves as the catalytic Proton acceptor.

The protein belongs to the class I-like SAM-binding methyltransferase superfamily. Cation-independent O-methyltransferase family. Homodimer. As to expression, expressed mainly in vasculature and cortex tissues at low levels.

It catalyses the reaction dopamine + S-adenosyl-L-methionine = 4-methoxytyramine + S-adenosyl-L-homocysteine + H(+). Its pathway is aromatic compound metabolism. The protein operates within alkaloid biosynthesis. O-methyltransferase participating in the biosynthesis of natural products derived from phenylethylamine, including mescaline, a natural hallucinogen potentially used in psychotherapeutic treatments. Catalyzes the O-methylation of dopamine to produce 4-methoxytyramine. The chain is O-methyltransferase 16 from Lophophora williamsii (Peyote).